A 326-amino-acid polypeptide reads, in one-letter code: MERKVHIIPYQVIKQEQQVNEIPRGVEMIQAPAVWNQTRGRGVKVAVLDTGCDADHPDLKARIIGGRNFTDDDEGDPEIFKDYNGHGTHVAGTIAATENENGVVGVAPEADLLIIKVLNKQGSGQYDWIIQGIYYAIEQKVDIISMSLGGPEDVPELHEAVKKAVASQILVMCAAGNEGDGDDRTDELGYPGCYNEVISVGAINFDRHASEFSNSNNEVDLVAPGEDILSTVPGGKYATFSGTSMATPHVAGALALIKQLANASFERDLTEPELYAQLIKRTIPLGNSPKMEGNGLLYLTAVEELSRIFDTQRVAGILSTASLKVK.

Residues 23-303 form the Peptidase S8 domain; the sequence is PRGVEMIQAP…NGLLYLTAVE (281 aa). Residues Asp49, His86, and Ser244 each act as charge relay system in the active site.

The protein belongs to the peptidase S8 family.

In terms of biological role, involved in the generation of beta- and alpha-amylases from the large amylase precursor. This is Intracellular serine protease (isp) from Paenibacillus polymyxa (Bacillus polymyxa).